A 203-amino-acid chain; its full sequence is MDALALIMTMAAYLLGSISSAVLICRLLRLPDPRKVGSNNPGATNVLRIGGKGAAVAVLLCDMLKGTIPVWGGYFLGIDPIILGVIAIAACLGHMYPIFFHFKGGKGVATALGAIAPIGLDLTGLVMLTWLSVAVLFRYSSLAALVTVLVTPFYTWMFKPQYTLPVAMLCCLIVFKHHQNIRRLLSGEEPKIGEKKLIEKNSA.

Transmembrane regions (helical) follow at residues 4–24 (LALI…AVLI), 68–88 (IPVW…VIAI), 117–137 (PIGL…AVLF), and 155–175 (TWMF…LIVF).

The protein belongs to the PlsY family. As to quaternary structure, probably interacts with PlsX.

It is found in the cell inner membrane. The enzyme catalyses an acyl phosphate + sn-glycerol 3-phosphate = a 1-acyl-sn-glycero-3-phosphate + phosphate. It functions in the pathway lipid metabolism; phospholipid metabolism. Its function is as follows. Catalyzes the transfer of an acyl group from acyl-phosphate (acyl-PO(4)) to glycerol-3-phosphate (G3P) to form lysophosphatidic acid (LPA). This enzyme utilizes acyl-phosphate as fatty acyl donor, but not acyl-CoA or acyl-ACP. This is Glycerol-3-phosphate acyltransferase from Vibrio campbellii (strain ATCC BAA-1116).